Reading from the N-terminus, the 776-residue chain is Probable E3 ubiquitin-protein ligase HECTD2 (776 aa).

A disordered region spans residues 1–46; sequence MSEAVRVPSPATPLVVAAAAPEERKGKESEREKLPPIVSAGAGATA. Low complexity predominate over residues 7 to 20; it reads VPSPATPLVVAAAA. The residue at position 9 (serine 9) is a Phosphoserine. Residues 21 to 34 show a composition bias toward basic and acidic residues; it reads PEERKGKESEREKL. The HECT domain maps to 437–776; it reads KRADLKKKLK…ISNSEGFGLE (340 aa). Residue cysteine 744 is the Glycyl thioester intermediate of the active site.

It catalyses the reaction S-ubiquitinyl-[E2 ubiquitin-conjugating enzyme]-L-cysteine + [acceptor protein]-L-lysine = [E2 ubiquitin-conjugating enzyme]-L-cysteine + N(6)-ubiquitinyl-[acceptor protein]-L-lysine.. The protein operates within protein modification; protein ubiquitination. Functionally, E3 ubiquitin-protein ligase which accepts ubiquitin from an E2 ubiquitin-conjugating enzyme in the form of a thioester and then directly transfers the ubiquitin to targeted substrates. This is Probable E3 ubiquitin-protein ligase HECTD2 (HECTD2) from Pongo abelii (Sumatran orangutan).